Reading from the N-terminus, the 500-residue chain is Intracellular exo-alpha-(1-&gt;5)-L-arabinofuranosidase (500 aa).

Glu-28, Asn-73, and Asn-173 together coordinate alpha-L-arabinofuranose. Residue Glu-174 is the Proton donor/acceptor of the active site. The alpha-L-arabinofuranose site is built by Tyr-245, Glu-293, and Gln-350. Residue Glu-293 is the Nucleophile of the active site.

It belongs to the glycosyl hydrolase 51 family. Homohexamer; trimer of dimers.

The protein resides in the cytoplasm. The enzyme catalyses Hydrolysis of terminal non-reducing alpha-L-arabinofuranoside residues in alpha-L-arabinosides.. The protein operates within glycan metabolism; L-arabinan degradation. Its function is as follows. Involved in the degradation of arabinan and is a key enzyme in the complete degradation of the plant cell wall. Catalyzes the cleavage of terminal alpha-(1-&gt;5)-arabinofuranosyl bonds in different hemicellulosic homopolysaccharides (branched and debranched arabinans). This Halalkalibacterium halodurans (strain ATCC BAA-125 / DSM 18197 / FERM 7344 / JCM 9153 / C-125) (Bacillus halodurans) protein is Intracellular exo-alpha-(1-&gt;5)-L-arabinofuranosidase (abfA).